Reading from the N-terminus, the 644-residue chain is Threonine--tRNA ligase (644 aa).

One can recognise a TGS domain in the interval 1–61 (MVAITLPDGN…TQDASVEIVT (61 aa)). The segment at 242-533 (DHRKIGKALN…LIEHYAGWMP (292 aa)) is catalytic. 3 residues coordinate Zn(2+): Cys333, His384, and His510.

It belongs to the class-II aminoacyl-tRNA synthetase family. In terms of assembly, homodimer. Zn(2+) serves as cofactor.

Its subcellular location is the cytoplasm. The enzyme catalyses tRNA(Thr) + L-threonine + ATP = L-threonyl-tRNA(Thr) + AMP + diphosphate + H(+). Catalyzes the attachment of threonine to tRNA(Thr) in a two-step reaction: L-threonine is first activated by ATP to form Thr-AMP and then transferred to the acceptor end of tRNA(Thr). Also edits incorrectly charged L-seryl-tRNA(Thr). In Psychrobacter sp. (strain PRwf-1), this protein is Threonine--tRNA ligase.